We begin with the raw amino-acid sequence, 515 residues long: ATP synthase subunit alpha (515 aa).

Gly171–Thr178 is an ATP binding site.

The protein belongs to the ATPase alpha/beta chains family. F-type ATPases have 2 components, CF(1) - the catalytic core - and CF(0) - the membrane proton channel. CF(1) has five subunits: alpha(3), beta(3), gamma(1), delta(1), epsilon(1). CF(0) has three main subunits: a(1), b(2) and c(9-12). The alpha and beta chains form an alternating ring which encloses part of the gamma chain. CF(1) is attached to CF(0) by a central stalk formed by the gamma and epsilon chains, while a peripheral stalk is formed by the delta and b chains.

The protein localises to the cell inner membrane. The enzyme catalyses ATP + H2O + 4 H(+)(in) = ADP + phosphate + 5 H(+)(out). Its function is as follows. Produces ATP from ADP in the presence of a proton gradient across the membrane. The alpha chain is a regulatory subunit. This Xanthomonas campestris pv. campestris (strain 8004) protein is ATP synthase subunit alpha.